The chain runs to 236 residues: Oligogalacturonate-specific porin KdgM (236 aa).

A signal peptide spans 1-20 (MKIKLLTLAVASLVSVNALA).

Belongs to the oligogalacturonate-specific porin KdgM (TC 1.B.35) family. Monomer.

It is found in the cell outer membrane. In terms of biological role, porin specific for oligogalacturonides. Also required for full virulence. This chain is Oligogalacturonate-specific porin KdgM (kdgM), found in Dickeya dadantii (strain 3937) (Erwinia chrysanthemi (strain 3937)).